The following is an 837-amino-acid chain: Semaphorin-4G (837 aa).

A signal peptide spans 1 to 17 (MWGRLWPLLFSFLTVTA). Residues 18-673 (VPGPSLRRPS…GAQLAHDMRM (656 aa)) lie on the Extracellular side of the membrane. Positions 35 to 503 (RLTISYEELS…AASGVLQFPL (469 aa)) constitute a Sema domain. Residues N55, N111, and N126 are each glycosylated (N-linked (GlcNAc...) asparagine). A disulfide bridge connects residues C104 and C115. Intrachain disulfides connect C133-C142, C268-C375, and C292-C335. N386 carries N-linked (GlcNAc...) asparagine glycosylation. The PSI domain maps to 505 to 556 (SCSRYQSCYDCILARDPYCGWDSSIHACMVATTVANRTELIQDIERGNRGCE). 2 disulfide bridges follow: C506–C523 and C515–C532. 2 N-linked (GlcNAc...) asparagine glycosylation sites follow: N540 and N596. Residues 565–647 (PPLKTRSVLR…RMLLASYSLT (83 aa)) form the Ig-like C2-type domain. An intrachain disulfide couples C582 to C630. Residues 674–694 (FYVVAIAILGGLCLILASSLL) traverse the membrane as a helical segment. The Cytoplasmic segment spans residues 695–837 (YVACLKGGRR…LVEQLDESSV (143 aa)). Residues 721–776 (SAVQLQTVSGQCPGEEDEGDDGEGTGGLESGCLQIIPGEGAPAPPPPPPPPPPAEL) form a disordered region. The segment covering 734–743 (GEEDEGDDGE) has biased composition (acidic residues). A compositionally biased stretch (pro residues) spans 762–774 (PAPPPPPPPPPPA). A phosphoserine mark is found at S794 and S836.

It belongs to the semaphorin family. As to quaternary structure, interacts with PLXNB2. As to expression, brain, spinal cord, and several sensory organs as well as specific populations of projection neurons.

It localises to the cell membrane. Its function is as follows. Cell surface receptor for PLXNB2. May play a role in axon guidance. This is Semaphorin-4G (Sema4g) from Mus musculus (Mouse).